The sequence spans 423 residues: Lysosomal acid phosphatase (423 aa).

Residues 1–30 (MAGRRFGWSRAALLQLILGVNLMVMPRTQA) form the signal peptide. The Lumenal segment spans residues 31–380 (RTLRFVTLLY…QLAGGPADTE (350 aa)). The active-site Nucleophile is the histidine 42. N-linked (GlcNAc...) asparagine glycans are attached at residues asparagine 92, asparagine 133, asparagine 167, asparagine 177, asparagine 191, and asparagine 267. Cystine bridges form between cysteine 159/cysteine 370, cysteine 212/cysteine 310, and cysteine 345/cysteine 349. Aspartate 287 (proton donor) is an active-site residue. N-linked (GlcNAc...) asparagine glycans are attached at residues asparagine 322 and asparagine 331. Residues 381–401 (VIVALAVCGSILFLLIVLLLT) form a helical membrane-spanning segment. At 402–423 (VLFRVQAQPPGYRHVPDGEDHA) the chain is on the cytoplasmic side.

It belongs to the histidine acid phosphatase family. In terms of processing, the membrane-bound form is converted to the soluble form by sequential proteolytic processing. First, the C-terminal cytoplasmic tail is removed. Cleavage by a lysosomal protease releases the soluble form in the lysosome lumen.

It is found in the lysosome membrane. Its subcellular location is the lysosome lumen. The enzyme catalyses a phosphate monoester + H2O = an alcohol + phosphate. The protein is Lysosomal acid phosphatase (ACP2) of Bos taurus (Bovine).